Here is a 520-residue protein sequence, read N- to C-terminus: Legumin A2 (520 aa).

Positions 1 to 22 (MATKLLALSLSFCFLLLGGCFA) are cleaved as a signal peptide. 2 cysteine pairs are disulfide-bonded: Cys32-Cys65 and Cys108-Cys342. Positions 37 to 233 (LNALEPDNRI…AFNVNRHIVD (197 aa)) constitute a Cupin type-1 1 domain. The segment at 250-339 (VKGGLSIISP…RRQGDNGLEE (90 aa)) is disordered. The Cupin type-1 2 domain maps to 348–497 (LNIGPSSSPD…TFNLQRNEAR (150 aa)).

It belongs to the 11S seed storage protein (globulins) family. As to quaternary structure, hexamer; each subunit is composed of an acidic and a basic chain derived from a single precursor and linked by a disulfide bond.

This protein found in the seeds of many leguminous and non-leguminous plants is the source of sulfur-containing amino acids in seed meals. The polypeptide is Legumin A2 (LEGA2) (Pisum sativum (Garden pea)).